Here is a 156-residue protein sequence, read N- to C-terminus: Small ribosomal subunit protein uS7 (156 aa).

Belongs to the universal ribosomal protein uS7 family. Part of the 30S ribosomal subunit. Contacts proteins S9 and S11.

One of the primary rRNA binding proteins, it binds directly to 16S rRNA where it nucleates assembly of the head domain of the 30S subunit. Is located at the subunit interface close to the decoding center, probably blocks exit of the E-site tRNA. In Bacillus velezensis (strain DSM 23117 / BGSC 10A6 / LMG 26770 / FZB42) (Bacillus amyloliquefaciens subsp. plantarum), this protein is Small ribosomal subunit protein uS7.